The chain runs to 445 residues: Methylenetetrahydrofolate--tRNA-(uracil-5-)-methyltransferase TrmFO (445 aa).

9-14 (GGGLAG) contacts FAD.

Belongs to the MnmG family. TrmFO subfamily. Requires FAD as cofactor.

Its subcellular location is the cytoplasm. The enzyme catalyses uridine(54) in tRNA + (6R)-5,10-methylene-5,6,7,8-tetrahydrofolate + NADH + H(+) = 5-methyluridine(54) in tRNA + (6S)-5,6,7,8-tetrahydrofolate + NAD(+). It carries out the reaction uridine(54) in tRNA + (6R)-5,10-methylene-5,6,7,8-tetrahydrofolate + NADPH + H(+) = 5-methyluridine(54) in tRNA + (6S)-5,6,7,8-tetrahydrofolate + NADP(+). Catalyzes the folate-dependent formation of 5-methyl-uridine at position 54 (M-5-U54) in all tRNAs. In Rhizorhabdus wittichii (strain DSM 6014 / CCUG 31198 / JCM 15750 / NBRC 105917 / EY 4224 / RW1) (Sphingomonas wittichii), this protein is Methylenetetrahydrofolate--tRNA-(uracil-5-)-methyltransferase TrmFO.